The chain runs to 615 residues: MSPLATKALRPAATDPASIRNFCIIAHIDHGKSTLADRMLQMTGVVDSRSMRAQYLDRMDIERERGITIKSQAVRMPWELDGQTYALNMIDTPGHVDFSYEVSRSLAACEGAILLVDAAQGIEAQTLANLYLALENDLTIIPVLNKIDLPAADPDKYAAELASLIGGDPSDVLRVSGKTGAGVEDLLDRVSRTIPAPVGDPDAAARAMIFDSVYDAYRGVVTYVRMIDGKLSPREKISMMSTRATHEILEIGVSSPEPTPSDGLGVGEVGYLITGVKDVRQSKVGDTVTTAARPATEALPGYTEPLPMVFSGLYPIDGSDYPDLRDALDKLKLSDAALVYEPETSVALGFGFRCGFLGLLHLEIITERLSREFGLDLITTAPSVIYEVTSEDKKTVTVTNPSEFPGGKIVSVSEPVVKAAILAPKDYVGTIMELCQSRRGILLGMEYLGEDRVEIRYTMPLGEIVFDFFDNLKSKTAGYASLDYEPAGSQDSDLVKVDILLQGEQVDAFSAIVHRDKAYAYGVLMTGRLRELIPRQQFEVPIQAAIGARIIARESIRAMRKDVLAKCYGGDITRKRKLLEKQKEGKKRMKMVGRVEVPQEAFIAALSGDTEKKAK.

The 182-residue stretch at Ala17 to Val198 folds into the tr-type G domain. Residues Asp29–Thr34 and Asn145–Asp148 contribute to the GTP site.

Belongs to the TRAFAC class translation factor GTPase superfamily. Classic translation factor GTPase family. LepA subfamily.

Its subcellular location is the cell membrane. It catalyses the reaction GTP + H2O = GDP + phosphate + H(+). Required for accurate and efficient protein synthesis under certain stress conditions. May act as a fidelity factor of the translation reaction, by catalyzing a one-codon backward translocation of tRNAs on improperly translocated ribosomes. Back-translocation proceeds from a post-translocation (POST) complex to a pre-translocation (PRE) complex, thus giving elongation factor G a second chance to translocate the tRNAs correctly. Binds to ribosomes in a GTP-dependent manner. The sequence is that of Elongation factor 4 from Clavibacter sepedonicus (Clavibacter michiganensis subsp. sepedonicus).